The primary structure comprises 216 residues: Small ribosomal subunit protein uS3 (216 aa).

A KH type-2 domain is found at 20 to 91; it reads LKEFFEKALV…SVEIVVEKVH (72 aa).

This sequence belongs to the universal ribosomal protein uS3 family.

This is Small ribosomal subunit protein uS3 (RPS3) from Encephalitozoon cuniculi (strain GB-M1) (Microsporidian parasite).